The chain runs to 201 residues: Small ribosomal subunit protein uS4c (201 aa).

The segment at 20-44 (GLTSKRPKAGSDLRNQSRSGKKSQY) is disordered. The region spanning 89–152 (MRLDNILFRL…NSRTLVQNLL (64 aa)) is the S4 RNA-binding domain.

It belongs to the universal ribosomal protein uS4 family. As to quaternary structure, part of the 30S ribosomal subunit. Contacts protein S5. The interaction surface between S4 and S5 is involved in control of translational fidelity.

The protein resides in the plastid. The protein localises to the chloroplast. Its function is as follows. One of the primary rRNA binding proteins, it binds directly to 16S rRNA where it nucleates assembly of the body of the 30S subunit. In terms of biological role, with S5 and S12 plays an important role in translational accuracy. The polypeptide is Small ribosomal subunit protein uS4c (rps4) (Barbarea verna (Land cress)).